We begin with the raw amino-acid sequence, 478 residues long: Cytochrome c-552 (478 aa).

The N-terminal stretch at 1 to 26 (MARKTLRARRFFSLIFPFFFITSVYA) is a signal peptide. Heme c is bound at residue His-94. Heme-binding residues include Cys-122, Cys-125, and Lys-126. Residues Cys-160, Cys-163, His-164, Cys-209, Cys-212, and His-213 each coordinate heme c. Ca(2+) contacts are provided by Glu-215, Tyr-216, Lys-261, and Gln-263. Residue Tyr-216 participates in substrate binding. His-264 serves as a coordination point for substrate. The heme c site is built by His-275, Cys-282, Cys-285, His-286, His-301, Cys-314, Cys-317, His-318, and His-393.

Belongs to the cytochrome c-552 family. Ca(2+) is required as a cofactor. The cofactor is heme c.

The protein resides in the periplasm. The enzyme catalyses 6 Fe(III)-[cytochrome c] + NH4(+) + 2 H2O = 6 Fe(II)-[cytochrome c] + nitrite + 8 H(+). Its pathway is nitrogen metabolism; nitrate reduction (assimilation). Catalyzes the reduction of nitrite to ammonia, consuming six electrons in the process. This Salmonella dublin (strain CT_02021853) protein is Cytochrome c-552.